Consider the following 1059-residue polypeptide: MTNSAYPRTDLGADQRGGSPNFPALEAQVLDYWSNDDTFRASIARCDDAPEYVFYDGPPFANGLPHYGHLLTGYVKDIVPRYRTMCGYKVERRFGWDTHGLPAELEVERQLGITDKSQIDAMGIAAFNEACRKSVLRYTEEWQAYVTRQARWVDFDNDYKTLDLSYMESVIWAFKQLWDKGLAYESYRVLPYCWRDETPLSNHELRMDDDVYQSRQDPAVTLGFKVLGGDDEDLVGAYLLVWTTTPWTLPSNLAVAVHPDVTYVDVRAGDRRFVLAQARLTAYARELGDEPEVLATYRGADLLGRHYLPPFQYFYESARNAFQVLPGDFVTTDDGTGIVHIAPAYGEDDMATADKVGIVPVTPVDSNGCFDATVPDYQGQHVFEANAQIIRDLKNQSGSAAVNGAVLLRHETYEHPYPHCWRCRNPLIYRAVSSWFVAVTEFRDRMVELNQQITWYPEHVKDGQFGKWLQGARDWSISRNRYWGTPIPVWKSDDPDYPRIDVYGSLDELERDFGVRPTNLHRPYIDELTRPNPDDPTGLSTMRRIPDVFDVWFDSGSMPYAQVHYPFENDDWFDGFDSADSDKQVDAHYPGDFIVEYIGQARGWFYTLHVLATALFDRPAFKTCIAHGVVLGSNGQKMSKSLRNYPDVTEIFDRDGSDAMRWFLMASPILRGGNLIITEPGIREGMRQVLLPLWNAYSFLALYAPKIGTWHTDVSHVLDRYILAKLAVLRDDLSQAMEVCDISGACEQLRQFTEPLTNWYLRRSRARFWDEDVDAIDTLHTVLEVTARLAAPLLPLITEIIWRSVTGGRSVHLTDWPQANQLPADPDLVAVMDQVRQVCSAASSLRKAKKLRVRLPLPKLVVAVYNSQRLKPYIDLIGDELNVKQIELTDAIDTYGRFEFTVNARVAGPRLGRDVQAAIKVVKAGEGVANPDGTLTAGPVVLQPDEYSSRLVAANPEFTAELPDGSGLVVLDDTVTPELEAEGWAKDRIRELQELRKLIGLDVSDRIRVLMSVPAERADWARVHRDFIAREILATSFEFGEPADSVAIGDGVRVSLLKV.

The 'HIGH' region motif lies at 59–69 (PFANGLPHYGH). Residues 637 to 641 (KMSKS) carry the 'KMSKS' region motif. An ATP-binding site is contributed by lysine 640.

It belongs to the class-I aminoacyl-tRNA synthetase family. IleS type 2 subfamily. As to quaternary structure, monomer. Zn(2+) is required as a cofactor.

It is found in the cytoplasm. It carries out the reaction tRNA(Ile) + L-isoleucine + ATP = L-isoleucyl-tRNA(Ile) + AMP + diphosphate. In terms of biological role, catalyzes the attachment of isoleucine to tRNA(Ile). As IleRS can inadvertently accommodate and process structurally similar amino acids such as valine, to avoid such errors it has two additional distinct tRNA(Ile)-dependent editing activities. One activity is designated as 'pretransfer' editing and involves the hydrolysis of activated Val-AMP. The other activity is designated 'posttransfer' editing and involves deacylation of mischarged Val-tRNA(Ile). This chain is Isoleucine--tRNA ligase, found in Mycobacterium leprae (strain TN).